The chain runs to 155 residues: Protein Smg homolog (155 aa).

The protein belongs to the Smg family.

The chain is Protein Smg homolog from Methylococcus capsulatus (strain ATCC 33009 / NCIMB 11132 / Bath).